A 195-amino-acid polypeptide reads, in one-letter code: Molybdenum cofactor guanylyltransferase (195 aa).

GTP-binding positions include 10–12, K23, N51, D69, and D99; that span reads LAG. D99 lines the Mg(2+) pocket.

Belongs to the MobA family. As to quaternary structure, monomer. Requires Mg(2+) as cofactor.

The protein resides in the cytoplasm. The catalysed reaction is Mo-molybdopterin + GTP + H(+) = Mo-molybdopterin guanine dinucleotide + diphosphate. In terms of biological role, transfers a GMP moiety from GTP to Mo-molybdopterin (Mo-MPT) cofactor (Moco or molybdenum cofactor) to form Mo-molybdopterin guanine dinucleotide (Mo-MGD) cofactor. This chain is Molybdenum cofactor guanylyltransferase, found in Yersinia pseudotuberculosis serotype O:1b (strain IP 31758).